Reading from the N-terminus, the 328-residue chain is Acetaldehyde dehydrogenase 3 (328 aa).

Position 17–20 (17–20 (SGNI)) interacts with NAD(+). Residue C135 is the Acyl-thioester intermediate of the active site. NAD(+)-binding positions include 166 to 174 (SAGPGTRAN) and N298.

It belongs to the acetaldehyde dehydrogenase family.

The catalysed reaction is acetaldehyde + NAD(+) + CoA = acetyl-CoA + NADH + H(+). The chain is Acetaldehyde dehydrogenase 3 from Nocardia farcinica (strain IFM 10152).